The chain runs to 111 residues: MKKLKSFGGKNLGGKSMNQLQKLQEEMQKKLQEVEEGFSNVEVDVSVGGGAIKIFATADRKVKDIEIDEDLLEDTETLNDLLIAGINELMEKIEKIREEEMAKITQNFLPF.

It belongs to the YbaB/EbfC family. Homodimer.

The protein resides in the cytoplasm. Its subcellular location is the nucleoid. Its function is as follows. Binds to DNA and alters its conformation. May be involved in regulation of gene expression, nucleoid organization and DNA protection. This is Nucleoid-associated protein Tmel_0542 from Thermosipho melanesiensis (strain DSM 12029 / CIP 104789 / BI429).